Reading from the N-terminus, the 108-residue chain is Nucleoid-associated protein BP1550 (108 aa).

The tract at residues 87–108 (SQEKMASVTAGMPLPPGMKLPF) is disordered. Over residues 99–108 (PLPPGMKLPF) the composition is skewed to pro residues.

It belongs to the YbaB/EbfC family. As to quaternary structure, homodimer.

Its subcellular location is the cytoplasm. It localises to the nucleoid. In terms of biological role, binds to DNA and alters its conformation. May be involved in regulation of gene expression, nucleoid organization and DNA protection. The polypeptide is Nucleoid-associated protein BP1550 (Bordetella pertussis (strain Tohama I / ATCC BAA-589 / NCTC 13251)).